A 347-amino-acid chain; its full sequence is Spermidine/putrescine import ATP-binding protein PotA (347 aa).

The ABC transporter domain occupies 6 to 238 (LEIKNLSHYY…PKTKFVADFI (233 aa)). 40 to 47 (GPSGCGKT) serves as a coordination point for ATP.

It belongs to the ABC transporter superfamily. Spermidine/putrescine importer (TC 3.A.1.11.1) family. In terms of assembly, the complex is composed of two ATP-binding proteins (PotA), two transmembrane proteins (PotB and PotC) and a solute-binding protein (PotD).

It is found in the cell inner membrane. It catalyses the reaction ATP + H2O + polyamine-[polyamine-binding protein]Side 1 = ADP + phosphate + polyamineSide 2 + [polyamine-binding protein]Side 1.. Functionally, part of the ABC transporter complex PotABCD involved in spermidine/putrescine import. Responsible for energy coupling to the transport system. The polypeptide is Spermidine/putrescine import ATP-binding protein PotA (Borreliella afzelii (strain PKo) (Borrelia afzelii)).